The sequence spans 129 residues: Trefoil factor 2 (129 aa).

Residues 1-23 (MGPRGAPLLAVVLVLGLHALVEG) form the signal peptide. P-type domains follow at residues 29 to 73 (CRCS…FHPL) and 79 to 122 (EQCV…FFPQ). Cystine bridges form between Cys29/Cys127, Cys31/Cys58, Cys42/Cys57, Cys52/Cys69, Cys81/Cys107, Cys91/Cys106, and Cys101/Cys118.

Stomach and pancreas.

The protein localises to the secreted. In terms of biological role, inhibits gastrointestinal motility and gastric acid secretion. Could function as a structural component of gastric mucus, possibly by stabilizing glycoproteins in the mucus gel through interactions with carbohydrate side chains. The polypeptide is Trefoil factor 2 (Tff2) (Mus musculus (Mouse)).